Here is a 326-residue protein sequence, read N- to C-terminus: tRNA-modifying protein YgfZ (326 aa).

2 residues coordinate folate: W27 and W189.

It belongs to the tRNA-modifying YgfZ family.

The protein resides in the cytoplasm. Folate-binding protein involved in regulating the level of ATP-DnaA and in the modification of some tRNAs. It is probably a key factor in regulatory networks that act via tRNA modification, such as initiation of chromosomal replication. The protein is tRNA-modifying protein YgfZ of Shigella boydii serotype 18 (strain CDC 3083-94 / BS512).